A 322-amino-acid polypeptide reads, in one-letter code: tRNA uridine(34) hydroxylase (322 aa).

The Rhodanese domain occupies 125–219 (QQEDTIVVDA…YGKDPEVQGE (95 aa)). Cysteine 179 (cysteine persulfide intermediate) is an active-site residue.

This sequence belongs to the TrhO family.

The catalysed reaction is uridine(34) in tRNA + AH2 + O2 = 5-hydroxyuridine(34) in tRNA + A + H2O. In terms of biological role, catalyzes oxygen-dependent 5-hydroxyuridine (ho5U) modification at position 34 in tRNAs. The chain is tRNA uridine(34) hydroxylase from Bacillus licheniformis (strain ATCC 14580 / DSM 13 / JCM 2505 / CCUG 7422 / NBRC 12200 / NCIMB 9375 / NCTC 10341 / NRRL NRS-1264 / Gibson 46).